Here is a 198-residue protein sequence, read N- to C-terminus: Molybdopterin synthase catalytic subunit (198 aa).

A compositionally biased stretch (low complexity) spans 1-27 (MASQPPQEPTPTATSTPSTSALASLPP). The interval 1 to 40 (MASQPPQEPTPTATSTPSTSALASLPPHLDPTTYPRTLTS) is disordered. Residues 143–144 (HR), Lys-159, and 166–168 (KRE) contribute to the substrate site. A disordered region spans residues 176-198 (EWRENRERDAEGKVVAEKQEERE).

Belongs to the MoaE family. MOCS2B subfamily. As to quaternary structure, heterotetramer; composed of 2 small (MOCS2A) and 2 large (MOCS2B) subunits.

The protein localises to the cytoplasm. It carries out the reaction 2 [molybdopterin-synthase sulfur-carrier protein]-C-terminal-Gly-aminoethanethioate + cyclic pyranopterin phosphate + H2O = molybdopterin + 2 [molybdopterin-synthase sulfur-carrier protein]-C-terminal Gly-Gly + 2 H(+). The protein operates within cofactor biosynthesis; molybdopterin biosynthesis. Catalytic subunit of the molybdopterin synthase complex, a complex that catalyzes the conversion of precursor Z into molybdopterin. Acts by mediating the incorporation of 2 sulfur atoms from thiocarboxylated MOCS2A into precursor Z to generate a dithiolene group. This Aspergillus clavatus (strain ATCC 1007 / CBS 513.65 / DSM 816 / NCTC 3887 / NRRL 1 / QM 1276 / 107) protein is Molybdopterin synthase catalytic subunit.